The chain runs to 468 residues: Probable xyloglucan galactosyltransferase GT13 (468 aa).

Residues 1–18 (MDKFNPKKEKTVKKRALK) lie on the Cytoplasmic side of the membrane. A helical; Signal-anchor for type II membrane protein membrane pass occupies residues 19-35 (VLTEISPTPLFSMLFLL). Over 36–468 (HISQIATYLS…RVSLFKMTRI (433 aa)) the chain is Lumenal. N-linked (GlcNAc...) asparagine glycosylation is found at Asn-53, Asn-116, Asn-153, Asn-240, and Asn-412.

This sequence belongs to the glycosyltransferase 47 family. In terms of tissue distribution, expressed in roots, hypocotyls, cotyledons, leaves, stems, petals and carpels.

It localises to the golgi apparatus membrane. In terms of biological role, functions in xyloglucan synthesis by adding side chains to the xylosylated glucan backbone. Involved in the galactosylation of hemicellulose xyloglucan. This is Probable xyloglucan galactosyltransferase GT13 from Arabidopsis thaliana (Mouse-ear cress).